A 776-amino-acid polypeptide reads, in one-letter code: U3 small nucleolar RNA-associated protein 4 (776 aa).

6 WD repeats span residues 35-40, 132-169, 178-214, 230-266, 271-308, and 417-452; these read RCRFVD, LPLRNYDCNSGVIWSISINDSQDKLSVGCDNGTVVLID, EHDTILMRQEARVLTLAWKKDDFVIGGCSDGRIRIWS, KVDKAKKESTLVWSVIYLPRTDQIASGDSTGSIKFWD, TLNQSFKAHDADVLCLTTDTDNNYVFSAGVDRKIFQFS, and VCKLTLKDDQNISTCSLSPDGQVLVVGRPSTTKVFH.

As to quaternary structure, interacts with snoRNA U3. Interacts with MPP10. Component of the ribosomal small subunit (SSU) processome composed of at least 40 protein subunits and snoRNA U3. In the absence of snoRNA3, forms a complex with other t-UTPs. This complex can associate with pre-18S ribosomal RNAs.

The protein localises to the nucleus. It localises to the nucleolus. In terms of biological role, involved in nucleolar processing of pre-18S ribosomal RNA. Required for optimal pre-ribosomal RNA transcription by RNA polymerase I together with a subset of U3 proteins required for transcription (t-UTPs). The sequence is that of U3 small nucleolar RNA-associated protein 4 (UTP4) from Saccharomyces cerevisiae (strain ATCC 204508 / S288c) (Baker's yeast).